The following is a 45-amino-acid chain: COP9 signalosome complex subunit 4 (45 aa).

This sequence belongs to the CSN4 family. As to quaternary structure, component of the CSN complex, probably composed of CSN1, CSN2, CSN3, CSN4, CSN5 (CSN5A or CSN5B), CSN6 (CSN6A or CSN6B), CSN7 and CSN8.

The protein resides in the cytoplasm. It is found in the nucleus. Component of the COP9 signalosome complex (CSN), a complex involved in various cellular and developmental processes such as photomorphogenesis and auxin and jasmonate responses. The CSN complex is an essential regulator of the ubiquitin (Ubl) conjugation pathway by mediating the deneddylation of the cullin subunits of SCF-type E3 ligase complexes, leading to decrease the Ubl ligase activity of SCF. It is involved in repression of photomorphogenesis in darkness by regulating the activity of COP1-containing Ubl ligase complexes. This chain is COP9 signalosome complex subunit 4 (CSN4), found in Brassica oleracea (Wild cabbage).